A 125-amino-acid polypeptide reads, in one-letter code: Snaclec botrocetin subunit beta (125 aa).

Cystine bridges form between cysteine 2-cysteine 13, cysteine 30-cysteine 121, and cysteine 98-cysteine 113. One can recognise a C-type lectin domain in the interval 9–122 (YEGHCYRFFK…CTRFKNFVCE (114 aa)).

Belongs to the snaclec family. In terms of assembly, heterodimer of subunits alpha and beta; disulfide-linked. Botrocetin and vWF form a soluble complex. In terms of tissue distribution, expressed by the venom gland.

It localises to the secreted. Its function is as follows. Snaclec that binds to von Willebrand factor (VWF) and induces its interaction with GPIbalpha (GP1BA) (via the vWF A1 domain), resulting in platelet aggregation. The protein is Snaclec botrocetin subunit beta of Bothrops jararaca (Jararaca).